The sequence spans 328 residues: MIRVAIDLMGGDRAPGEILEGARLFSRKDCKLFLVGTKEALANATGFEKVEVSDFLPMDVKPTEILRRKTSSMYIGLKLLKEGAVDVFISAGNTGALLAGATFILGRIHGVERPALAVPVPSLNGFTVLIDAGANVRSRPEHLVDFAVMGLSYAKVLGREKPSIGLLNVGEEETKGDETTRETYELLKRYFPDFFIGNVEGHDLNTGKADVVVTEGFSGNVAMKTMEGTAKMILDTLKSEVKKAGFVQKIGALLMKKVFSSLKKALDPRSYGGAFILGVNGLVVKAHGSSDRLAIQNALEVARVGAEMKIVESIEGEIKRVRDSGADR.

It belongs to the PlsX family. In terms of assembly, homodimer. Probably interacts with PlsY.

The protein localises to the cytoplasm. The catalysed reaction is a fatty acyl-[ACP] + phosphate = an acyl phosphate + holo-[ACP]. It functions in the pathway lipid metabolism; phospholipid metabolism. Its function is as follows. Catalyzes the reversible formation of acyl-phosphate (acyl-PO(4)) from acyl-[acyl-carrier-protein] (acyl-ACP). This enzyme utilizes acyl-ACP as fatty acyl donor, but not acyl-CoA. The protein is Phosphate acyltransferase of Pseudothermotoga lettingae (strain ATCC BAA-301 / DSM 14385 / NBRC 107922 / TMO) (Thermotoga lettingae).